The primary structure comprises 225 residues: Heptaprenylglyceryl phosphate synthase (225 aa).

Position 6 (K6) interacts with sn-glycerol 1-phosphate. 2 residues coordinate Mg(2+): D8 and T34. Sn-glycerol 1-phosphate is bound by residues 153 to 158 (YVEYSG), G183, and 203 to 204 (GN).

This sequence belongs to the GGGP/HepGP synthase family. Group I subfamily. As to quaternary structure, homodimer. It depends on Mg(2+) as a cofactor.

The enzyme catalyses sn-glycerol 1-phosphate + all-trans-heptaprenyl diphosphate = 3-heptaprenyl-sn-glycero-1-phosphate + diphosphate. It functions in the pathway membrane lipid metabolism; glycerophospholipid metabolism. Its function is as follows. Prenyltransferase that catalyzes in vivo the transfer of the heptaprenyl moiety of heptaprenyl pyrophosphate (HepPP; 35 carbon atoms) to the C3 hydroxyl of sn-glycerol-1-phosphate (G1P), producing heptaprenylglyceryl phosphate (HepGP). This reaction is an ether-bond-formation step in the biosynthesis of archaea-type G1P-based membrane lipids found in Bacillales. The polypeptide is Heptaprenylglyceryl phosphate synthase (Listeria monocytogenes serotype 4b (strain CLIP80459)).